A 311-amino-acid chain; its full sequence is tRNA dimethylallyltransferase (311 aa).

13-20 lines the ATP pocket; it reads GPTASGKT. Residue 15–20 participates in substrate binding; the sequence is TASGKT. 2 interaction with substrate tRNA regions span residues 38 to 41 and 166 to 170; these read DSMQ and QRVLR.

Belongs to the IPP transferase family. As to quaternary structure, monomer. Mg(2+) serves as cofactor.

It catalyses the reaction adenosine(37) in tRNA + dimethylallyl diphosphate = N(6)-dimethylallyladenosine(37) in tRNA + diphosphate. Catalyzes the transfer of a dimethylallyl group onto the adenine at position 37 in tRNAs that read codons beginning with uridine, leading to the formation of N6-(dimethylallyl)adenosine (i(6)A). This chain is tRNA dimethylallyltransferase, found in Staphylococcus aureus (strain Mu3 / ATCC 700698).